The chain runs to 54 residues: UPF0391 membrane protein PFL_0093 (54 aa).

2 consecutive transmembrane segments (helical) span residues 4–24 (WAITFLIIAIVAAVLGFGGIA) and 29–49 (GIAKILFVVFLVMFIASFFFG).

It belongs to the UPF0391 family.

Its subcellular location is the cell membrane. In Pseudomonas fluorescens (strain ATCC BAA-477 / NRRL B-23932 / Pf-5), this protein is UPF0391 membrane protein PFL_0093.